A 496-amino-acid polypeptide reads, in one-letter code: MALRAGEHSQEAANGLKEKVLTLDSMNPYVRRVEYAVRGPIVQRALELEQELRQGVKKPFTEVIRANIGDAQAMGQIPITFPRQVLALCVHPDLLNSPDFPDDAKRRAERILQACGGHSLGAYSISAGVQMIREDVARYIERRDGGIPADPNNIFLSTGASDAIVTVLKLLVTGEGRTRTGVLIPIPQYPLYSAALAEFNAVQVDYYLDEERAWALDVAELRRALRQARDHCRPRALCVINPGNPTGQVQTRECIEDVIRFAYEEKLFLLADEVYQDNVYAESSQFHSFKKVLTEMGPPYAAQQELASFHSISKGYMGECGFRGGYVEVVNMDAAVKQQMQKLRSVRLCPPTPGQVLLDVAVSPPAPSDPSFPRFQAERRAVLAELAAKAKLTEQVFNEAPGIRCNPVQGAMYSFPRVQLPPRAVQRAQELGLAPDMFFCLRLLEETGICVVPGSGFGQREGTYHFRMTILPPMEKLRPLLEKLSQFHAKFTREYS.

A2 carries the post-translational modification N-acetylalanine. T22 carries the post-translational modification Phosphothreonine. K314 is subject to N6-(pyridoxal phosphate)lysine.

The protein belongs to the class-I pyridoxal-phosphate-dependent aminotransferase family. Alanine aminotransferase subfamily. In terms of assembly, homodimer. Pyridoxal 5'-phosphate serves as cofactor.

The protein localises to the cytoplasm. It catalyses the reaction L-alanine + 2-oxoglutarate = pyruvate + L-glutamate. It participates in amino-acid degradation; L-alanine degradation via transaminase pathway; pyruvate from L-alanine: step 1/1. Functionally, catalyzes the reversible transamination between alanine and 2-oxoglutarate to form pyruvate and glutamate. Participates in cellular nitrogen metabolism and also in liver gluconeogenesis starting with precursors transported from skeletal muscles. The chain is Alanine aminotransferase 1 (GPT) from Bos taurus (Bovine).